The sequence spans 823 residues: MDRDLEQALDRAENIIEIAQQRPPRRRYSPRAGKTLQEKLYDIYVEECGKEPEDPQELRSNVNLLEKLVRRESLPCLLVNLYPGNQGYSVMLQREDGSFAETIRLPYEERALLDYLDAEELPPALGDVLDKASVNIFHSGCVIVEVRDYRQSSNMQPPGYQSRHILLRPTMQTLAHDVKMMTRDGQKWSQEDKLQLESQLILATAEPLCLDPSVAVACTANRLLYNKQKMNTDPMKRCLQRYSWPSVKPQQEQSDCPPPPELRVSTSGQKEERKVGQPCELNIAKAGSCVDTWKGRPCDLAVPSEVDVEKLAKGYQSVTAADPQLPVWPAQEVEDPFGFALEAGCQAWDTKPSIMQSFNDPLLCGKIRPRKKARQKSQKSPWQPFPDDHSACLRPGSETDAGRAVSQAQESVQSKVKGPGKMSHSSSGPASVSQLSSWKTPEQPDPVWVQSSVSGKGEKHPPPRTQLPSSSGKISSGNSFPPQQAGSPLKPAAPAAAASAAPSHSQKPSVPLIQASRPCPAAQPPTKFIKIAPAIQLRTGSTGLKAINVEGPVQGAQALGSSFKPVQAPGSGAPAPAGISGSDLQSSGGPLPDARPGAVQASSPAPLQFFLNTPEGLRPLTLLQVPQGSAVLTGPQQQSHQLVSLQQLQQPTAAHPPQPGPQGSALGLSTQGQAFPAQQLLKVNPTRARSGLQPQPQPAVLSLLGSAQVPQQGVQLPSVLRQQQPQPQPPKLQLQPQWQPKPRQEQPQSQQQQPQHIQLQTQQLRVLQQPQHIQLQTQQLRVLQQPVFLATGAVQIVQPHPGVQVGSQLVDQRKEGKPTPPAP.

Disordered stretches follow at residues 246 to 273 (SVKP…KEER), 369 to 524 (PRKK…AAQP), 560 to 601 (GSSF…AVQA), 631 to 669 (VLTG…LGLS), and 720 to 757 (LRQQ…PQHI). Positions 423–440 (SHSSSGPASVSQLSSWKT) are enriched in polar residues. Composition is skewed to low complexity over residues 469-509 (SSSG…QKPS), 568-582 (APGS…ISGS), and 636-650 (QQQS…QLQQ).

The protein belongs to the SPT20 family.

The chain is Transcription factor SPT20 homolog-like 1 (SUPT20HL1) from Homo sapiens (Human).